Here is a 106-residue protein sequence, read N- to C-terminus: Iron-sulfur cluster assembly protein CyaY (106 aa).

Belongs to the frataxin family.

In terms of biological role, involved in iron-sulfur (Fe-S) cluster assembly. May act as a regulator of Fe-S biogenesis. The sequence is that of Iron-sulfur cluster assembly protein CyaY from Salmonella dublin (strain CT_02021853).